We begin with the raw amino-acid sequence, 137 residues long: Universal stress protein HP_0031 (137 aa).

This sequence belongs to the universal stress protein A family.

The polypeptide is Universal stress protein HP_0031 (Helicobacter pylori (strain ATCC 700392 / 26695) (Campylobacter pylori)).